Reading from the N-terminus, the 1035-residue chain is Kinesin-like protein KIN-4A (1035 aa).

The region spanning 11–370 (SVKVAVHIRP…LKYANRARNI (360 aa)) is the Kinesin motor domain. 90-97 (GQTGSGKT) contributes to the ATP binding site. 3 coiled-coil regions span residues 408-436 (CAEV…HEYR), 504-707 (QNSM…RKSS), and 881-911 (KEIV…IATS). The disordered stretch occupies residues 704–724 (RKSSPREHSAGTNGFGTNGQT).

It belongs to the TRAFAC class myosin-kinesin ATPase superfamily. Kinesin family. KIN-4 subfamily. Homodimer. Expressed in stems and flowers. Detected in cells undergoing secondary wall deposition including developing interfascicular fibers and xylem cells, but also in dividing cells and expanding/elongating parenchyma cells.

Its subcellular location is the cytoplasm. It localises to the cytoskeleton. Its function is as follows. Kinesin-like motor protein involved in the control of the oriented deposition of cellulose microfibrils. Its motor activity is directed toward the microtubule's plus end. It possesses the potential to drive long-distance transport of cargo along cortical microtubules. Regulates cell wall mechanics during cell elongation, by the regulation of primary and secondary walls deposition. Contributes to cortical microtubule-mediated trafficking of cell wall components. This chain is Kinesin-like protein KIN-4A, found in Arabidopsis thaliana (Mouse-ear cress).